We begin with the raw amino-acid sequence, 167 residues long: Transcriptional regulator MraZ (167 aa).

2 SpoVT-AbrB domains span residues 8–51 and 92–135; these read ESHH…YGDH and SLPT…KPET.

The protein belongs to the MraZ family. Forms oligomers.

It is found in the cytoplasm. It localises to the nucleoid. In Ruegeria sp. (strain TM1040) (Silicibacter sp.), this protein is Transcriptional regulator MraZ.